The primary structure comprises 347 residues: Melatonin receptor type 1B-B (347 aa).

Over 1–36 the chain is Extracellular; the sequence is MPENIAFLTNSTDLGHVGRALGSSARPAWAIAVLAS. The N-linked (GlcNAc...) asparagine glycan is linked to N10. The chain crosses the membrane as a helical span at residues 37–57; it reads VLIFTTVVDVLGNLLVIISVF. Residues 58–72 are Cytoplasmic-facing; the sequence is RNRKLRNAGNVFVVS. The helical transmembrane segment at 73 to 93 threads the bilayer; sequence LAFADLVVAFYPYPLVLYAIF. Over 94 to 105 the chain is Extracellular; it reads HDGWSLGETQCK. A disulfide bridge links C104 with C181. Residues 106–126 form a helical membrane-spanning segment; it reads ISGFLMGLSVIGSVFNITGIA. Over 127–148 the chain is Cytoplasmic; that stretch reads INRYCYICHSFAYGRLYSFRNT. Residues 149–169 traverse the membrane as a helical segment; the sequence is LLLVALIWALTVLAILPNFFV. Residues 170 to 191 are Extracellular-facing; that stretch reads GSLSYDPRVYSCTFTQTASSSY. The helical transmembrane segment at 192 to 212 threads the bilayer; that stretch reads TVVVVVVHFLVPIAVVTFCYL. Residues 213–244 are Cytoplasmic-facing; the sequence is RIWVLVIQVRRKVKSEERSRVRPSDLRNFVTM. The chain crosses the membrane as a helical span at residues 245–265; the sequence is FVVFVLFAICWAPLNLIGLVV. Residues 266–278 lie on the Extracellular side of the membrane; that stretch reads AINPEVMAPRVPE. A helical transmembrane segment spans residues 279 to 299; the sequence is WLFVVSYFMAYFNSCLNAIIY. Residues 300-347 are Cytoplasmic-facing; that stretch reads GLLNRNFRKEYVRIMTAVWIPRRFVTETSRAATDGMRSKPSPAINNNE.

The protein belongs to the G-protein coupled receptor 1 family.

It is found in the cell membrane. High affinity receptor for melatonin. The activity of this receptor is mediated by pertussis toxin sensitive G proteins that inhibits adenylate cyclase activity. This is Melatonin receptor type 1B-B (mtnr1bb) from Danio rerio (Zebrafish).